The primary structure comprises 282 residues: Bifunctional protein FolD (282 aa).

Residues 163 to 165 (NRS), threonine 188, and isoleucine 229 each bind NADP(+).

Belongs to the tetrahydrofolate dehydrogenase/cyclohydrolase family. As to quaternary structure, homodimer.

The enzyme catalyses (6R)-5,10-methylene-5,6,7,8-tetrahydrofolate + NADP(+) = (6R)-5,10-methenyltetrahydrofolate + NADPH. It carries out the reaction (6R)-5,10-methenyltetrahydrofolate + H2O = (6R)-10-formyltetrahydrofolate + H(+). It participates in one-carbon metabolism; tetrahydrofolate interconversion. In terms of biological role, catalyzes the oxidation of 5,10-methylenetetrahydrofolate to 5,10-methenyltetrahydrofolate and then the hydrolysis of 5,10-methenyltetrahydrofolate to 10-formyltetrahydrofolate. The polypeptide is Bifunctional protein FolD (Malacoplasma penetrans (strain HF-2) (Mycoplasma penetrans)).